Here is a 1761-residue protein sequence, read N- to C-terminus: Nonribosomal peptide synthetase 6 (1761 aa).

An adenylation region spans residues 63–468 (ERAALHPEKI…GRQDQQVKLR (406 aa)). Residues 600–675 (EATTEMELKL…AMAEKAKPVS (76 aa)) enclose the Carrier 1 domain. At Ser-636 the chain carries O-(pantetheine 4'-phosphoryl)serine. Positions 712-1135 (VEDVYPCTPL…AVLDPAEARD (424 aa)) are condensation 1. 2 Carrier domains span residues 1169 to 1242 (SPNE…SNER) and 1237 to 1313 (SASN…EEEM). O-(pantetheine 4'-phosphoryl)serine is present on residues Ser-1203 and Ser-1274. The condensation 2 stretch occupies residues 1354-1677 (IYPTRPLQQL…DKVQWFDTVV (324 aa)).

It belongs to the NRP synthetase family.

The protein operates within siderophore biosynthesis. NRPS involved in extracellular coprogen-type siderophores biosynthesis including coprogen, neocoprogen I and neocoprogen II. The role of extracellular siderophores in fungal virulence to plants is to supply iron to the fungus during plant infection, but not to act as phytotoxins, depriving their hosts of iron. This chain is Nonribosomal peptide synthetase 6, found in Cochliobolus miyabeanus (Brown spot disease fungus).